The sequence spans 351 residues: 3-dehydroquinate synthase (351 aa).

NAD(+)-binding positions include 60 to 65 (DGEEYK), 94 to 98 (GVISD), 118 to 119 (TT), lysine 131, lysine 140, and 158 to 161 (FLKT). Positions 173, 239, and 256 each coordinate Zn(2+).

The protein belongs to the sugar phosphate cyclases superfamily. Dehydroquinate synthase family. Co(2+) serves as cofactor. Zn(2+) is required as a cofactor. It depends on NAD(+) as a cofactor.

It is found in the cytoplasm. It carries out the reaction 7-phospho-2-dehydro-3-deoxy-D-arabino-heptonate = 3-dehydroquinate + phosphate. Its pathway is metabolic intermediate biosynthesis; chorismate biosynthesis; chorismate from D-erythrose 4-phosphate and phosphoenolpyruvate: step 2/7. Its function is as follows. Catalyzes the conversion of 3-deoxy-D-arabino-heptulosonate 7-phosphate (DAHP) to dehydroquinate (DHQ). The sequence is that of 3-dehydroquinate synthase from Campylobacter jejuni subsp. jejuni serotype O:6 (strain 81116 / NCTC 11828).